Here is a 479-residue protein sequence, read N- to C-terminus: Ribosomal RNA small subunit methyltransferase F (479 aa).

S-adenosyl-L-methionine-binding positions include 125–131 (AAAPGSK), Glu149, Asp176, and Asp194. Cys247 serves as the catalytic Nucleophile.

It belongs to the class I-like SAM-binding methyltransferase superfamily. RsmB/NOP family.

It is found in the cytoplasm. It carries out the reaction cytidine(1407) in 16S rRNA + S-adenosyl-L-methionine = 5-methylcytidine(1407) in 16S rRNA + S-adenosyl-L-homocysteine + H(+). Specifically methylates the cytosine at position 1407 (m5C1407) of 16S rRNA. The sequence is that of Ribosomal RNA small subunit methyltransferase F from Escherichia coli O17:K52:H18 (strain UMN026 / ExPEC).